The following is a 92-amino-acid chain: Isoleucine--tRNA ligase (92 aa).

Residues Cys-55, Cys-58, Cys-75, and Cys-78 each coordinate Zn(2+).

The protein belongs to the class-I aminoacyl-tRNA synthetase family. IleS type 1 subfamily. Monomer. It depends on Zn(2+) as a cofactor.

The protein localises to the cytoplasm. It carries out the reaction tRNA(Ile) + L-isoleucine + ATP = L-isoleucyl-tRNA(Ile) + AMP + diphosphate. Its function is as follows. Catalyzes the attachment of isoleucine to tRNA(Ile). As IleRS can inadvertently accommodate and process structurally similar amino acids such as valine, to avoid such errors it has two additional distinct tRNA(Ile)-dependent editing activities. One activity is designated as 'pretransfer' editing and involves the hydrolysis of activated Val-AMP. The other activity is designated 'posttransfer' editing and involves deacylation of mischarged Val-tRNA(Ile). In Klebsiella aerogenes (Enterobacter aerogenes), this protein is Isoleucine--tRNA ligase (ileS).